Consider the following 151-residue polypeptide: UPF0178 protein YaiI (151 aa).

The protein belongs to the UPF0178 family.

The sequence is that of UPF0178 protein YaiI from Salmonella enteritidis PT4 (strain P125109).